We begin with the raw amino-acid sequence, 258 residues long: Imidazole glycerol phosphate synthase subunit HisF (258 aa).

Residues D11 and D130 contribute to the active site.

The protein belongs to the HisA/HisF family. In terms of assembly, heterodimer of HisH and HisF.

Its subcellular location is the cytoplasm. The catalysed reaction is 5-[(5-phospho-1-deoxy-D-ribulos-1-ylimino)methylamino]-1-(5-phospho-beta-D-ribosyl)imidazole-4-carboxamide + L-glutamine = D-erythro-1-(imidazol-4-yl)glycerol 3-phosphate + 5-amino-1-(5-phospho-beta-D-ribosyl)imidazole-4-carboxamide + L-glutamate + H(+). It participates in amino-acid biosynthesis; L-histidine biosynthesis; L-histidine from 5-phospho-alpha-D-ribose 1-diphosphate: step 5/9. IGPS catalyzes the conversion of PRFAR and glutamine to IGP, AICAR and glutamate. The HisF subunit catalyzes the cyclization activity that produces IGP and AICAR from PRFAR using the ammonia provided by the HisH subunit. This Shigella flexneri serotype 5b (strain 8401) protein is Imidazole glycerol phosphate synthase subunit HisF.